A 448-amino-acid polypeptide reads, in one-letter code: Dual specificity mitogen-activated protein kinase kinase 5 (448 aa).

Residues 18–25 form an interaction with MAPK7 region; the sequence is VIRIKIPN. A PB1 domain is found at 18 to 109; it reads VIRIKIPNSG…EPLQIFPRAC (92 aa). The interaction with MAP3K2/MAP3K3 stretch occupies residues 64-68; the sequence is DEDGD. Residues 116–144 form a disordered region; it reads NIHGLKVNTRAGPSQHSSPAVSDSLPSNS. The interaction with MAPK7 stretch occupies residues 117 to 131; that stretch reads IHGLKVNTRAGPSQH. Over residues 126-144 the composition is skewed to polar residues; sequence AGPSQHSSPAVSDSLPSNS. Residues 166-409 form the Protein kinase domain; it reads IRYRDTLGHG…MRKQPKERPA (244 aa). Residues 172–180 and K195 each bind ATP; that span reads LGHGNGGTV. The active-site Proton acceptor is D283. S311 is subject to Phosphoserine. T315 carries the post-translational modification Phosphothreonine.

This sequence belongs to the protein kinase superfamily. STE Ser/Thr protein kinase family. MAP kinase kinase subfamily. Interacts with PARD6A, MAP3K3 and MAPK7. Forms a complex with SQSTM1 and PRKCZ or PRKCI. As to quaternary structure, (Microbial infection) Interacts with Yersinia YopJ. Mg(2+) is required as a cofactor. Post-translationally, activated by phosphorylation on Ser/Thr by MAP kinase kinase kinases. (Microbial infection) Yersinia YopJ may acetylate Ser/Thr residues, preventing phosphorylation and activation, thus blocking the MAPK signaling pathway. Expressed in many adult tissues. Abundant in heart and skeletal muscle.

It carries out the reaction L-seryl-[protein] + ATP = O-phospho-L-seryl-[protein] + ADP + H(+). It catalyses the reaction L-threonyl-[protein] + ATP = O-phospho-L-threonyl-[protein] + ADP + H(+). The catalysed reaction is L-tyrosyl-[protein] + ATP = O-phospho-L-tyrosyl-[protein] + ADP + H(+). Acts as a scaffold for the formation of a ternary MAP3K2/MAP3K3-MAP3K5-MAPK7 signaling complex. Activation of this pathway appears to play a critical role in protecting cells from stress-induced apoptosis, neuronal survival and cardiac development and angiogenesis. As part of the MAPK/ERK signaling pathway, acts as a negative regulator of apoptosis in cardiomyocytes via promotion of STUB1/CHIP-mediated ubiquitination and degradation of ICER-type isoforms of CREM. This Homo sapiens (Human) protein is Dual specificity mitogen-activated protein kinase kinase 5 (MAP2K5).